We begin with the raw amino-acid sequence, 352 residues long: Holliday junction branch migration complex subunit RuvB (352 aa).

A large ATPase domain (RuvB-L) region spans residues 4–185 (PDRLISAVSG…FGIVQRLEFY (182 aa)). Residues Ile-24, Arg-25, Gly-66, Lys-69, Thr-70, Thr-71, 132–134 (EDF), Arg-175, Tyr-185, and Arg-222 contribute to the ATP site. Thr-70 is a binding site for Mg(2+). The small ATPAse domain (RuvB-S) stretch occupies residues 186–256 (NVEDLATIVS…IADKALNLLD (71 aa)). Residues 259–352 (ERGFDHLDRR…SDLFTSEDGN (94 aa)) are head domain (RuvB-H). 3 residues coordinate DNA: Arg-295, Arg-314, and Arg-319.

This sequence belongs to the RuvB family. As to quaternary structure, homohexamer. Forms an RuvA(8)-RuvB(12)-Holliday junction (HJ) complex. HJ DNA is sandwiched between 2 RuvA tetramers; dsDNA enters through RuvA and exits via RuvB. An RuvB hexamer assembles on each DNA strand where it exits the tetramer. Each RuvB hexamer is contacted by two RuvA subunits (via domain III) on 2 adjacent RuvB subunits; this complex drives branch migration. In the full resolvosome a probable DNA-RuvA(4)-RuvB(12)-RuvC(2) complex forms which resolves the HJ.

Its subcellular location is the cytoplasm. The enzyme catalyses ATP + H2O = ADP + phosphate + H(+). In terms of biological role, the RuvA-RuvB-RuvC complex processes Holliday junction (HJ) DNA during genetic recombination and DNA repair, while the RuvA-RuvB complex plays an important role in the rescue of blocked DNA replication forks via replication fork reversal (RFR). RuvA specifically binds to HJ cruciform DNA, conferring on it an open structure. The RuvB hexamer acts as an ATP-dependent pump, pulling dsDNA into and through the RuvAB complex. RuvB forms 2 homohexamers on either side of HJ DNA bound by 1 or 2 RuvA tetramers; 4 subunits per hexamer contact DNA at a time. Coordinated motions by a converter formed by DNA-disengaged RuvB subunits stimulates ATP hydrolysis and nucleotide exchange. Immobilization of the converter enables RuvB to convert the ATP-contained energy into a lever motion, pulling 2 nucleotides of DNA out of the RuvA tetramer per ATP hydrolyzed, thus driving DNA branch migration. The RuvB motors rotate together with the DNA substrate, which together with the progressing nucleotide cycle form the mechanistic basis for DNA recombination by continuous HJ branch migration. Branch migration allows RuvC to scan DNA until it finds its consensus sequence, where it cleaves and resolves cruciform DNA. The protein is Holliday junction branch migration complex subunit RuvB of Pseudomonas paraeruginosa (strain DSM 24068 / PA7) (Pseudomonas aeruginosa (strain PA7)).